The primary structure comprises 139 residues: D-ribose pyranase (139 aa).

His-20 functions as the Proton donor in the catalytic mechanism. Residues Asp-28, His-106, and 128-130 (YAN) contribute to the substrate site.

It belongs to the RbsD / FucU family. RbsD subfamily. In terms of assembly, homodecamer.

It localises to the cytoplasm. The enzyme catalyses beta-D-ribopyranose = beta-D-ribofuranose. Its pathway is carbohydrate metabolism; D-ribose degradation; D-ribose 5-phosphate from beta-D-ribopyranose: step 1/2. Functionally, catalyzes the interconversion of beta-pyran and beta-furan forms of D-ribose. The sequence is that of D-ribose pyranase from Aeromonas salmonicida (strain A449).